Reading from the N-terminus, the 748-residue chain is 5-methyltetrahydropteroyltriglutamate--homocysteine methyltransferase (748 aa).

Residues 18–21 (REWK) and Lys-112 each bind 5-methyltetrahydropteroyltri-L-glutamate. L-homocysteine is bound by residues 420-422 (IGS) and Glu-473. Residues 420-422 (IGS) and Glu-473 each bind L-methionine. Position 550 (Trp-550) interacts with 5-methyltetrahydropteroyltri-L-glutamate. L-homocysteine is bound at residue Asp-588. Asp-588 is an L-methionine binding site. Glu-594 lines the 5-methyltetrahydropteroyltri-L-glutamate pocket. Positions 630, 632, and 654 each coordinate Zn(2+). His-683 acts as the Proton donor in catalysis. Cys-715 provides a ligand contact to Zn(2+).

It belongs to the vitamin-B12 independent methionine synthase family. The cofactor is Zn(2+).

It catalyses the reaction 5-methyltetrahydropteroyltri-L-glutamate + L-homocysteine = tetrahydropteroyltri-L-glutamate + L-methionine. Its pathway is amino-acid biosynthesis; L-methionine biosynthesis via de novo pathway; L-methionine from L-homocysteine (MetE route): step 1/1. Its function is as follows. Catalyzes the transfer of a methyl group from 5-methyltetrahydrofolate to homocysteine resulting in methionine formation. This chain is 5-methyltetrahydropteroyltriglutamate--homocysteine methyltransferase, found in Staphylococcus epidermidis (strain ATCC 12228 / FDA PCI 1200).